Here is a 67-residue protein sequence, read N- to C-terminus: Large ribosomal subunit protein bL35 (67 aa).

The protein belongs to the bacterial ribosomal protein bL35 family.

The protein is Large ribosomal subunit protein bL35 of Deinococcus geothermalis (strain DSM 11300 / CIP 105573 / AG-3a).